We begin with the raw amino-acid sequence, 369 residues long: Choline-phosphate cytidylyltransferase B (369 aa).

Residues 1-27 (MPVVTTDAESETGIPKSLSNEPPSETM) form a disordered region. CTP contacts are provided by Ile-84, Phe-85, His-92, and Lys-122. Positions 122 and 151 each coordinate phosphocholine. His-168, Asp-169, Tyr-173, Gln-195, Arg-196, Thr-197, and Ile-200 together coordinate CTP. The tract at residues 309–369 (RMLQALSPKQ…SMSEGDEDEK (61 aa)) is disordered. Residues Ser-315, Ser-319, Ser-322, Ser-323, Ser-329, Ser-331, and Ser-335 each carry the phosphoserine modification. Residues 319–339 (SPVSSPTRSRSPSRSPSPTFS) show a composition bias toward low complexity. Thr-345 is modified (phosphothreonine). Ser-346, Ser-349, Ser-350, Ser-355, Ser-360, and Ser-362 each carry phosphoserine. Over residues 351 to 362 (PKAASASISSMS) the composition is skewed to low complexity.

The protein belongs to the cytidylyltransferase family. As to quaternary structure, homodimer. Phosphorylated. Post-translationally, extensively phosphorylated. As to expression, highly expressed in testis, placenta, brain, ovary, liver and fetal lung. In terms of tissue distribution, expressed in brain, liver and fetal lung.

The protein resides in the cytoplasm. It is found in the endoplasmic reticulum. It catalyses the reaction phosphocholine + CTP + H(+) = CDP-choline + diphosphate. The protein operates within phospholipid metabolism; phosphatidylcholine biosynthesis; phosphatidylcholine from phosphocholine: step 1/2. Functionally, catalyzes the key rate-limiting step in the CDP-choline pathway for phosphatidylcholine biosynthesis. The chain is Choline-phosphate cytidylyltransferase B (PCYT1B) from Homo sapiens (Human).